We begin with the raw amino-acid sequence, 143 residues long: Nucleoside diphosphate kinase (143 aa).

In terms of domain architecture, NDPK-like spans 1 to 132; that stretch reads MVKPDGVQRG…LWFSPQELCQ (132 aa). Lysine 3, phenylalanine 51, arginine 79, threonine 85, arginine 96, valine 103, and asparagine 106 together coordinate ADP. ATP is bound by residues lysine 3, phenylalanine 51, arginine 79, threonine 85, and arginine 96. Asparagine 106 lines the ATP pocket. Catalysis depends on histidine 109, which acts as the Pros-phosphohistidine intermediate.

It belongs to the NDK family. Homohexamer. The cofactor is Mg(2+).

The enzyme catalyses a 2'-deoxyribonucleoside 5'-diphosphate + ATP = a 2'-deoxyribonucleoside 5'-triphosphate + ADP. It carries out the reaction a ribonucleoside 5'-diphosphate + ATP = a ribonucleoside 5'-triphosphate + ADP. It catalyses the reaction GDP + ATP = GTP + ADP. It participates in purine metabolism; purine nucleotide biosynthesis. In terms of biological role, major role in the synthesis of nucleoside triphosphates other than ATP. The ATP gamma phosphate is transferred to the NDP beta phosphate via a ping-pong mechanism, using a phosphorylated active-site intermediate. The protein is Nucleoside diphosphate kinase of Schistosoma mansoni (Blood fluke).